The following is a 53-amino-acid chain: Light-harvesting protein B800/850/890 beta-1 chain (53 aa).

Topologically, residues 1–19 are cytoplasmic; the sequence is ADNMSLTGLSDEEAKEFHS. Residues histidine 18 and histidine 36 each contribute to the a bacteriochlorophyll site. The helical transmembrane segment at 20 to 42 threads the bilayer; that stretch reads IFMQSFLIFTAVAVVAHFLAWAW. Residues 43 to 53 lie on the Periplasmic side of the membrane; sequence RPWIPGAEGYG.

This sequence belongs to the antenna complex beta subunit family. As to quaternary structure, the core complex is formed by different alpha and beta chains, binding bacteriochlorophyll molecules, and arranged most probably in tetrameric structures disposed around the reaction center. The non-pigmented gamma chains may constitute additional components.

The protein localises to the cell inner membrane. In terms of biological role, antenna complexes are light-harvesting systems, which transfer the excitation energy to the reaction centers. The polypeptide is Light-harvesting protein B800/850/890 beta-1 chain (Halorhodospira halophila (strain DSM 244 / SL1) (Ectothiorhodospira halophila (strain DSM 244 / SL1))).